The primary structure comprises 128 residues: Large ribosomal subunit protein uL22 (128 aa).

Belongs to the universal ribosomal protein uL22 family. As to quaternary structure, part of the 50S ribosomal subunit.

Functionally, this protein binds specifically to 23S rRNA; its binding is stimulated by other ribosomal proteins, e.g. L4, L17, and L20. It is important during the early stages of 50S assembly. It makes multiple contacts with different domains of the 23S rRNA in the assembled 50S subunit and ribosome. Its function is as follows. The globular domain of the protein is located near the polypeptide exit tunnel on the outside of the subunit, while an extended beta-hairpin is found that lines the wall of the exit tunnel in the center of the 70S ribosome. The chain is Large ribosomal subunit protein uL22 from Rhodopseudomonas palustris (strain BisA53).